A 471-amino-acid chain; its full sequence is Variant surface glycoprotein ILTAT 1.21 (471 aa).

The signal sequence occupies residues 1–21 (MLRALLPSTTLALILAGGGHA). Residues Asn64 and Asn405 are each glycosylated (N-linked (GlcNAc...) asparagine). The segment at 406 to 449 (ATADECPETRCEYDSEKNECRPKKGTETTATGPGERTTPADGKA) is disordered. A compositionally biased stretch (basic and acidic residues) spans 412-431 (PETRCEYDSEKNECRPKKGT). An N-linked (GlcNAc...) asparagine glycan is attached at Asn450. Residue Ser454 is the site of GPI-anchor amidated serine attachment. The propeptide at 455-471 (DSLLIKTSPLWLAFLLF) is removed in mature form.

Its subcellular location is the cell membrane. Its function is as follows. VSG forms a coat on the surface of the parasite. The trypanosome evades the immune response of the host by expressing a series of antigenically distinct VSGs from an estimated 1000 VSG genes. The sequence is that of Variant surface glycoprotein ILTAT 1.21 from Trypanosoma brucei brucei.